A 392-amino-acid polypeptide reads, in one-letter code: THO complex subunit MFT1 (392 aa).

2 stretches are compositionally biased toward acidic residues: residues 258-271 (DNID…EDEE) and 290-330 (NVDE…EVDG). The interval 258 to 392 (DNIDEDYESD…SASSSVEEVK (135 aa)) is disordered. A Phosphoserine modification is found at S266. Over residues 331–344 (ESSQQEDNSRQGNN) the composition is skewed to polar residues. Acidic residues predominate over residues 345–367 (EETDKETGVIEEPDAVNDAEEAD). Polar residues predominate over residues 377 to 392 (GTTSDFSASSSVEEVK).

In terms of assembly, component of the THO complex, which is composed of HPR1, MFT1, THO2 and THP2. Together with SUB2, TEX1 and YRA1, THO forms the transcription/export (TREX) complex. THO associates with DNA and RNA in vitro.

The protein localises to the nucleus. Functionally, component the THO subcomplex of the TREX complex, which operates in coupling transcription elongation to mRNA export. The THO complex is recruited to transcribed genes and moves along the gene with the elongating polymerase during transcription. THO is important for stabilizing nascent RNA in the RNA polymerase II elongation complex by preventing formation of DNA:RNA hybrids behind the elongating polymerase. It functions in cotranscriptional formation of an export-competent messenger ribonucleoprotein particle (mRNP) by facilitating the loading of ATP-dependent RNA helicase SUB2 and the mRNA export factor YRA1 along the nascent mRNA. This chain is THO complex subunit MFT1 (MFT1), found in Saccharomyces cerevisiae (strain ATCC 204508 / S288c) (Baker's yeast).